Here is a 245-residue protein sequence, read N- to C-terminus: Eukaryotic translation initiation factor 6 (245 aa).

Tyrosine 113 carries the phosphotyrosine modification. Threonine 165 is modified (phosphothreonine). A Phosphoserine modification is found at serine 166. Phosphoserine; by CK1 is present on residues serine 174 and serine 175. Serine 235 bears the Phosphoserine; by PKC mark. A phosphoserine mark is found at serine 239 and serine 243.

It belongs to the eIF-6 family. As to quaternary structure, monomer. Associates with the 60S ribosomal subunit. Interacts with RACK1. Interacts with DICER1, AGO2, TARBP2, MOV10 and RPL7A; they form a large RNA-induced silencing complex (RISC). Phosphorylation at Ser-174 and Ser-175 by CSNK1D/CK1 promotes nuclear export. In terms of processing, ufmylated by UFL1.

It localises to the cytoplasm. The protein localises to the nucleus. Its subcellular location is the nucleolus. Functionally, binds to the 60S ribosomal subunit and prevents its association with the 40S ribosomal subunit to form the 80S initiation complex in the cytoplasm. Behaves as a stimulatory translation initiation factor downstream insulin/growth factors. Is also involved in ribosome biogenesis. Associates with pre-60S subunits in the nucleus and is involved in its nuclear export. Cytoplasmic release of TIF6 from 60S subunits and nuclear relocalization is promoted by a RACK1 (RACK1)-dependent protein kinase C activity. In tissues responsive to insulin, controls fatty acid synthesis and glycolysis by exerting translational control of adipogenic transcription factors such as CEBPB, CEBPD and ATF4 that have G/C rich or uORF in their 5'UTR. Required for ROS-dependent megakaryocyte maturation and platelets formation, controls the expression of mitochondrial respiratory chain genes involved in reactive oxygen species (ROS) synthesis. Involved in miRNA-mediated gene silencing by the RNA-induced silencing complex (RISC). Required for both miRNA-mediated translational repression and miRNA-mediated cleavage of complementary mRNAs by RISC. Modulates cell cycle progression and global translation of pre-B cells, its activation seems to be rate-limiting in tumorigenesis and tumor growth. In Rattus norvegicus (Rat), this protein is Eukaryotic translation initiation factor 6 (Eif6).